The following is a 546-amino-acid chain: Chaperonin GroEL (546 aa).

Residues 30 to 33 (TLGP), Lys51, 87 to 91 (DGTTT), Gly415, and Asp496 contribute to the ATP site. A disordered region spans residues 526 to 546 (PQKDAPAGGGMPDMGGMGGMM). The span at 532-546 (AGGGMPDMGGMGGMM) shows a compositional bias: gly residues.

This sequence belongs to the chaperonin (HSP60) family. Forms a cylinder of 14 subunits composed of two heptameric rings stacked back-to-back. Interacts with the co-chaperonin GroES.

It is found in the cytoplasm. It catalyses the reaction ATP + H2O + a folded polypeptide = ADP + phosphate + an unfolded polypeptide.. In terms of biological role, together with its co-chaperonin GroES, plays an essential role in assisting protein folding. The GroEL-GroES system forms a nano-cage that allows encapsulation of the non-native substrate proteins and provides a physical environment optimized to promote and accelerate protein folding. The sequence is that of Chaperonin GroEL from Ruegeria pomeroyi (strain ATCC 700808 / DSM 15171 / DSS-3) (Silicibacter pomeroyi).